A 226-amino-acid chain; its full sequence is V-type proton ATPase subunit E (226 aa).

Belongs to the V-ATPase E subunit family. As to quaternary structure, V-ATPase is a heteromultimeric enzyme composed of a peripheral catalytic V1 complex (components A to H) attached to an integral membrane V0 proton pore complex (components: a, c, c', c'', d, e, f and VOA1).

The protein resides in the vacuole membrane. Its function is as follows. Subunit of the V1 complex of vacuolar(H+)-ATPase (V-ATPase), a multisubunit enzyme composed of a peripheral complex (V1) that hydrolyzes ATP and a membrane integral complex (V0) that translocates protons. V-ATPase is responsible for acidifying and maintaining the pH of intracellular compartments. The sequence is that of V-type proton ATPase subunit E (VMA4) from Candida albicans (Yeast).